We begin with the raw amino-acid sequence, 433 residues long: Enolase 2 (433 aa).

Residues arginine 34–lysine 56 form a disordered region. A compositionally biased stretch (basic and acidic residues) spans glycine 44–lysine 56. Glutamine 163 contributes to the (2R)-2-phosphoglycerate binding site. Catalysis depends on glutamate 205, which acts as the Proton donor. Residues aspartate 243, glutamate 290, and aspartate 317 each contribute to the Mg(2+) site. Lysine 342, arginine 371, serine 372, and lysine 393 together coordinate (2R)-2-phosphoglycerate. The Proton acceptor role is filled by lysine 342.

It belongs to the enolase family. Mg(2+) is required as a cofactor.

The protein resides in the cytoplasm. It is found in the secreted. The protein localises to the cell surface. It carries out the reaction (2R)-2-phosphoglycerate = phosphoenolpyruvate + H2O. It functions in the pathway carbohydrate degradation; glycolysis; pyruvate from D-glyceraldehyde 3-phosphate: step 4/5. Catalyzes the reversible conversion of 2-phosphoglycerate (2-PG) into phosphoenolpyruvate (PEP). It is essential for the degradation of carbohydrates via glycolysis. In Lactococcus lactis subsp. cremoris (strain SK11), this protein is Enolase 2.